Consider the following 370-residue polypeptide: Actin-related protein 2/3 complex subunit 1A (370 aa).

WD repeat units lie at residues 6–45, 50–89, 140–179, 202–241, 244–284, and 322–365; these read FLLEPITCHAWNRDRTQIALSPNNHEVHIYKKNGSQWVKA, EHNGHITGIDWAPKSDRIVTCGADRNAYVWSQKDGVWKPT, PIRSTVLSLDWHPNNVLLAAGSCDFKCRVFSAYIKEVDEK, GTGGWVHGVSFSASGSRLAWVSHDSTVSVADASKSVQVST, TEFL…TFVS, and LHQN…SSIQ.

This sequence belongs to the WD repeat ARPC1 family. As to quaternary structure, probable component of the Arp2/3 complex in which it may replace ARPC1B. In addition to its role in the cytoplasmic cytoskeleton, the Arp2/3 complex also promotes actin polymerization in the nucleus, thereby regulating gene transcription and repair of damaged DNA.

It is found in the cytoplasm. The protein localises to the cytoskeleton. The protein resides in the nucleus. Functionally, probably functions as a component of the Arp2/3 complex which is involved in regulation of actin polymerization and together with an activating nucleation-promoting factor (NPF) mediates the formation of branched actin networks. The sequence is that of Actin-related protein 2/3 complex subunit 1A (ARPC1A) from Homo sapiens (Human).